The sequence spans 529 residues: hal-like protein DDB_G0273787/DDB_G0273081 (529 aa).

The 5-imidazolinone (Ala-Gly) cross-link spans 151–153 (ASG). The residue at position 152 (serine 152) is a 2,3-didehydroalanine (Ser).

This sequence belongs to the PAL/histidase family. Post-translationally, contains an active site 4-methylidene-imidazol-5-one (MIO), which is formed autocatalytically by cyclization and dehydration of residues Ala-Ser-Gly.

It localises to the cytoplasm. The enzyme catalyses L-histidine = trans-urocanate + NH4(+). It participates in amino-acid degradation; L-histidine degradation into L-glutamate; N-formimidoyl-L-glutamate from L-histidine: step 1/3. In Dictyostelium discoideum (Social amoeba), this protein is hal-like protein DDB_G0273787/DDB_G0273081.